A 444-amino-acid chain; its full sequence is Argininosuccinate synthase (444 aa).

ATP contacts are provided by residues 17–25 (AFSGGLDTS) and Ala-43. Tyr-99 contributes to the L-citrulline binding site. Gly-129 and Thr-131 together coordinate ATP. 3 residues coordinate L-aspartate: Thr-131, Asn-135, and Asp-136. Asn-135 serves as a coordination point for L-citrulline. Asp-136 is a binding site for ATP. 2 residues coordinate L-citrulline: Arg-139 and Ser-192. Residue Asp-194 participates in ATP binding. Residues Thr-201, Glu-203, and Glu-280 each contribute to the L-citrulline site.

This sequence belongs to the argininosuccinate synthase family. Type 2 subfamily. As to quaternary structure, homotetramer.

It localises to the cytoplasm. It catalyses the reaction L-citrulline + L-aspartate + ATP = 2-(N(omega)-L-arginino)succinate + AMP + diphosphate + H(+). The protein operates within amino-acid biosynthesis; L-arginine biosynthesis; L-arginine from L-ornithine and carbamoyl phosphate: step 2/3. This is Argininosuccinate synthase from Paraburkholderia phymatum (strain DSM 17167 / CIP 108236 / LMG 21445 / STM815) (Burkholderia phymatum).